The primary structure comprises 219 residues: Large ribosomal subunit protein uL29m (219 aa).

Residues 77-97 form a disordered region; it reads ASKYPLPKPVSPEKLEKREST. A compositionally biased stretch (basic and acidic residues) spans 87–97; the sequence is SPEKLEKREST.

Belongs to the universal ribosomal protein uL29 family. As to quaternary structure, component of the mitochondrial large ribosomal subunit. Mature mitochondrial ribosomes consist of a small (37S) and a large (54S) subunit. The 37S subunit contains at least 33 different proteins and 1 molecule of RNA (15S). The 54S subunit contains at least 45 different proteins and 1 molecule of RNA (21S).

It is found in the mitochondrion. This Emericella nidulans (strain FGSC A4 / ATCC 38163 / CBS 112.46 / NRRL 194 / M139) (Aspergillus nidulans) protein is Large ribosomal subunit protein uL29m (mrpl4).